The sequence spans 210 residues: Glutathione S-transferase mdpJ (210 aa).

A GST N-terminal domain is found at 2–83; the sequence is SFGTLYTHNP…YCNDERSSLR (82 aa). The region spanning 77–200 is the GST C-terminal domain; sequence DERSSLRILQ…VAGGVPDLGL (124 aa).

Belongs to the GST superfamily.

It participates in secondary metabolite biosynthesis. In terms of biological role, glutathione S-transferase; part of the gene cluster that mediates the biosynthesis of monodictyphenone, a prenyl xanthone derivative. The pathway begins with the synthesis of atrochrysone thioester by the polyketide synthase (PKS) mdpG. The atrochrysone carboxyl ACP thioesterase mdpF then breaks the thioester bond and releases the atrochrysone carboxylic acid from mdpG. The atrochrysone carboxylic acid is then converted to atrochrysone which is further transformed into emodin anthrone. The next step is performed by the anthrone oxygenase mdpH that catalyzes the oxidation of emodinanthrone to emodin. Emodin is further modified to yield monodictyphenone via several steps involving mdpB, mdpC mdpJ, mdpK and mdpL. These enzymes with xptA, xptB and xptC are also proposed to be involved in the synthesis of shamixanthone from emodin. Especially, direct reduction of emodin by the short chain dehydrogenase mdpC followed by dehydration catalyzed by the scytalone dehydratase-like protein mdpB gives loss of oxygen and formation of chrysophanol intermediate in two simple steps. This Emericella nidulans (strain FGSC A4 / ATCC 38163 / CBS 112.46 / NRRL 194 / M139) (Aspergillus nidulans) protein is Glutathione S-transferase mdpJ.